A 325-amino-acid polypeptide reads, in one-letter code: GPI-linked NAD(P)(+)--arginine ADP-ribosyltransferase 1 (325 aa).

An N-terminal signal peptide occupies residues 1–22 (MKIPAMMSLLLVSVGLRDGVQV). Disulfide bonds link Cys-53–Cys-272 and Cys-169–Cys-219. Asn-65 carries an N-linked (GlcNAc...) asparagine glycan. The TR mART core domain occupies 73 to 268 (KVYADGWAQA…IYLRALGKRS (196 aa)). NAD(+)-binding residues include Tyr-117 and Arg-174. Active-site residues include Arg-174 and Ser-197. NAD(+) is bound at residue Ser-228. Glu-235 is an active-site residue. The N-linked (GlcNAc...) asparagine glycan is linked to Asn-248. Ser-290 carries GPI-anchor amidated serine lipidation. Residues 291–325 (APGSISASCSLLLLLLFLVLSALPENPGLQQLTRC) constitute a propeptide, removed in mature form.

The protein belongs to the Arg-specific ADP-ribosyltransferase family. As to expression, abundantly expressed in cardiac and skeletal muscle. Low levels also found in lung.

It is found in the sarcoplasmic reticulum membrane. The catalysed reaction is L-arginyl-[protein] + NAD(+) = N(omega)-(ADP-D-ribosyl)-L-arginyl-[protein] + nicotinamide + H(+). Has ADP-ribosyltransferase activity toward GLP1R. This Mus musculus (Mouse) protein is GPI-linked NAD(P)(+)--arginine ADP-ribosyltransferase 1 (Art1).